A 1600-amino-acid chain; its full sequence is E3 ubiquitin-protein ligase listerin (1600 aa).

11 HEAT repeats span residues 31 to 65 (SSVP…CVKK), 114 to 150 (KTLP…DSDQ), 161 to 202 (GKLL…SSMA), 245 to 288 (YQLV…DLLR), 291 to 344 (ISVT…PDYA), 526 to 606 (RNYK…AALS), 853 to 904 (YTTN…DIRT), 962 to 986 (YASK…GAKF), 1045 to 1083 (LYNV…WVQT), 1289 to 1324 (VDVR…KADN), and 1325 to 1369 (SLNA…EEGT). The RING-type; degenerate zinc-finger motif lies at 1537-1583 (CPICYAVVSADKKLPDKRCSTCNNLFHRLCLYKWFQNSNKNTCPLCR).

This sequence belongs to the LTN1 family. As to quaternary structure, component of the ribosome quality control complex (RQC), composed of the E3 ubiquitin ligase RKR1/LTN1, RQC1 and RQC2, as well as CDC48 and its ubiquitin-binding cofactors associated with the 60S ribosomal subunits.

The protein localises to the nucleus. It is found in the cytoplasm. It localises to the cytosol. The enzyme catalyses S-ubiquitinyl-[E2 ubiquitin-conjugating enzyme]-L-cysteine + [acceptor protein]-L-lysine = [E2 ubiquitin-conjugating enzyme]-L-cysteine + N(6)-ubiquitinyl-[acceptor protein]-L-lysine.. It participates in protein modification; protein ubiquitination. In terms of biological role, E3 ubiquitin-protein ligase component of the ribosome quality control complex (RQC), a ribosome-associated complex that mediates ubiquitination and extraction of incompletely synthesized nascent chains for proteasomal degradation. Mediates ubiquitination of proteins derived from mRNAs lacking stop codons (non-stop proteins) and other translation arrest products induced by poly-lysine sequences and tandem rare codons. Ubiquitination leads to CDC48 recruitment for extraction and degradation of the incomplete translation product. May indirectly play a role in chromatin function and transcription. This is E3 ubiquitin-protein ligase listerin (rkr-1) from Neurospora crassa (strain ATCC 24698 / 74-OR23-1A / CBS 708.71 / DSM 1257 / FGSC 987).